The following is a 428-amino-acid chain: Bifunctional IPC transferase and DIPP synthase (428 aa).

Residues V2–A227 are mobA-like NTP transferase. Residues L8–G10, K25, E80, and E116 contribute to the CTP site. E116 is a binding site for Mg(2+). Residues I228–K425 are CDP-alcohol phosphatidyltransferases. 3 consecutive transmembrane segments (helical) span residues F266–L286, P336–Y356, and M389–I409.

The protein in the N-terminal section; belongs to the MobA family. In the C-terminal section; belongs to the CDP-alcohol phosphatidyltransferase class-I family. Mg(2+) is required as a cofactor.

It is found in the membrane. The enzyme catalyses 1D-myo-inositol 3-phosphate + CTP + H(+) = CDP-1L-myo-inositol + diphosphate. It carries out the reaction CDP-1L-myo-inositol + 1D-myo-inositol 3-phosphate = bis(1L-myo-inositol) 3,1'-phosphate 1-phosphate + CMP + H(+). Involved in biosynthesis of di-myo-inositol phosphate (DIP), a widespread organic solute in microorganisms adapted to hot environments. Catalyzes the condensation of CTP and L-myo-inositol-1-phosphate into CDP-L-myo-inositol, as well as the biosynthesis of di-myo-inositol-1,3'-phosphate-1'-phosphate (DIPP) from CDP-L-myo-inositol and L-myo-inositol-1-phosphate. The polypeptide is Bifunctional IPC transferase and DIPP synthase (spsI) (Aquifex aeolicus (strain VF5)).